A 257-amino-acid polypeptide reads, in one-letter code: Trans-aconitate 2-methyltransferase (257 aa).

This sequence belongs to the methyltransferase superfamily. Tam family.

Its subcellular location is the cytoplasm. The catalysed reaction is trans-aconitate + S-adenosyl-L-methionine = (E)-3-(methoxycarbonyl)pent-2-enedioate + S-adenosyl-L-homocysteine. Its function is as follows. Catalyzes the S-adenosylmethionine monomethyl esterification of trans-aconitate. The sequence is that of Trans-aconitate 2-methyltransferase from Sinorhizobium medicae (strain WSM419) (Ensifer medicae).